The following is a 363-amino-acid chain: Serpentine receptor class beta-17 (363 aa).

Transmembrane regions (helical) follow at residues 46 to 66, 75 to 95, 120 to 140, 169 to 189, 214 to 234, 273 to 293, and 304 to 324; these read AFLL…GSII, LLAF…SCFL, VILA…SMLC, IGFV…LYMY, YIFI…IGLY, CAQL…RIFL, and VTEF…ICIV.

This sequence belongs to the nematode receptor-like protein srb family.

Its subcellular location is the membrane. In Caenorhabditis elegans, this protein is Serpentine receptor class beta-17 (srb-17).